Reading from the N-terminus, the 450-residue chain is Trigger factor (450 aa).

The PPIase FKBP-type domain occupies 161-246; it reads GDRVVIDFKG…VKTVEAPEYP (86 aa). Residues 422 to 450 form a disordered region; sequence PMSLQELMSPQQPEAESAEGESKQDETKE. Basic and acidic residues predominate over residues 441 to 450; sequence GESKQDETKE.

This sequence belongs to the FKBP-type PPIase family. Tig subfamily.

Its subcellular location is the cytoplasm. The enzyme catalyses [protein]-peptidylproline (omega=180) = [protein]-peptidylproline (omega=0). Functionally, involved in protein export. Acts as a chaperone by maintaining the newly synthesized protein in an open conformation. Functions as a peptidyl-prolyl cis-trans isomerase. In Alkalilimnicola ehrlichii (strain ATCC BAA-1101 / DSM 17681 / MLHE-1), this protein is Trigger factor.